Here is a 270-residue protein sequence, read N- to C-terminus: LIM zinc-binding domain-containing Nebulette (270 aa).

The 61-residue stretch at 3–63 (PQCARCGKVV…NAHYPKQSFT (61 aa)) folds into the LIM zinc-binding domain. The Nebulin 1 repeat unit spans residues 61–95 (SFTTVADTPENLRLKQQSELQSQVKYKRDFEESKG). R96 is subject to Omega-N-methylarginine. Residues 97–131 (GFSIVTDTPELQRLKRTQEQISNVKYHEDFEKTKG) form a Nebulin 2 repeat. Omega-N-methylarginine is present on R132. A Nebulin 3 repeat occupies 133-159 (GFTPVVDDPVTERVRKSTQVVSDAAYK). Position 135 is a phosphothreonine (T135). In terms of domain architecture, SH3 spans 210–270 (AHLRTYRAMY…LPANYIEFVN (61 aa)). The residue at position 230 (S230) is a Phosphoserine.

It localises to the cytoplasm. Its function is as follows. Binds to actin and plays an important role in the assembly of the Z-disk. Isoform 2 might play a role in the assembly of focal adhesion. The sequence is that of LIM zinc-binding domain-containing Nebulette (Nebl) from Mus musculus (Mouse).